The primary structure comprises 187 residues: Transcriptional regulator VspR (187 aa).

Represses the transcription of several genes encoded within the Vibrio 7th pandemic island-1 (VSP-1), including dncV, VC_0176, VC_0178 and VC_0180. In Vibrio cholerae serotype O1 (strain ATCC 39315 / El Tor Inaba N16961), this protein is Transcriptional regulator VspR (vspR).